Reading from the N-terminus, the 524-residue chain is Thioredoxin reductase 2, mitochondrial (524 aa).

The N-terminal 36 residues, 1 to 36, are a transit peptide targeting the mitochondrion; it reads MAAMAVALRGLGGRFRWRTQAVAGGVRGAARGAAAG. An FAD-binding site is contributed by 41-70; the sequence is DLLVVGGGSGGLACAKEAAQLGRKVAVVDY. Cysteine 86 and cysteine 91 are disulfide-bonded. Residues lysine 175 and lysine 329 each carry the N6-succinyllysine modification. The active-site Proton acceptor is the histidine 497. Positions 522–523 form a cross-link, cysteinyl-selenocysteine (Cys-Sec); it reads CU. Selenocysteine 523 is a non-standard amino acid (selenocysteine).

This sequence belongs to the class-I pyridine nucleotide-disulfide oxidoreductase family. As to quaternary structure, homodimer. FAD serves as cofactor. Highly expressed in the prostate, ovary, liver, testis, uterus, colon and small intestine. Intermediate levels in brain, skeletal muscle, heart and spleen. Low levels in placenta, pancreas, thymus and peripheral blood leukocytes. According to PubMed:10608886, high levels in kidney, whereas according to PubMed:9923614, levels are low. High expression is observed in the adrenal cortex.

It is found in the mitochondrion. The catalysed reaction is [thioredoxin]-dithiol + NADP(+) = [thioredoxin]-disulfide + NADPH + H(+). Involved in the control of reactive oxygen species levels and the regulation of mitochondrial redox homeostasis. Maintains thioredoxin in a reduced state. May play a role in redox-regulated cell signaling. The sequence is that of Thioredoxin reductase 2, mitochondrial from Homo sapiens (Human).